Reading from the N-terminus, the 232-residue chain is MLEGIFDINHIFDEDGIKTLKRFGWDGSVAVQNHNEYSEEIINSAVEYGEKHDFKVFSGVKISTKNQNEMEKAVKKYRNKADILLVEGGDIKINRRVLEMNDVDILSTPELNRMDNGLDHILARLGSTNRVAIELNFGNLLKSRNYDRSKILWAFQRNLKLAKKYDTPVVISSGASDIYGIKAPGDLRGFLNTVTDPLYSKKIMETTSKIIDYRLYLKKDTVLTLGIEIVEE.

Belongs to the eukaryotic/archaeal RNase P protein component 3 family. As to quaternary structure, consists of a catalytic RNA component and at least 4-5 protein subunits.

It localises to the cytoplasm. It catalyses the reaction Endonucleolytic cleavage of RNA, removing 5'-extranucleotides from tRNA precursor.. Functionally, part of ribonuclease P, a protein complex that generates mature tRNA molecules by cleaving their 5'-ends. This Methanococcus maripaludis (strain C7 / ATCC BAA-1331) protein is Ribonuclease P protein component 3.